Here is a 308-residue protein sequence, read N- to C-terminus: Methionyl-tRNA formyltransferase (308 aa).

S109–P112 provides a ligand contact to (6S)-5,6,7,8-tetrahydrofolate.

This sequence belongs to the Fmt family.

The enzyme catalyses L-methionyl-tRNA(fMet) + (6R)-10-formyltetrahydrofolate = N-formyl-L-methionyl-tRNA(fMet) + (6S)-5,6,7,8-tetrahydrofolate + H(+). Functionally, attaches a formyl group to the free amino group of methionyl-tRNA(fMet). The formyl group appears to play a dual role in the initiator identity of N-formylmethionyl-tRNA by promoting its recognition by IF2 and preventing the misappropriation of this tRNA by the elongation apparatus. The sequence is that of Methionyl-tRNA formyltransferase from Salinispora arenicola (strain CNS-205).